Here is a 1096-residue protein sequence, read N- to C-terminus: Lysine-specific demethylase PHF2 (1096 aa).

A PHD-type zinc finger spans residues 5 to 56 (PVYCVCRLPYDVTRFMIECDACKDWFHGSCVGVEEEEAPDIDIYHCPNCEKT). 2-oxoglutarate-binding residues include Thr193 and Thr246. The region spanning 197–353 (FSDTRMSSFV…MQMRAYEVER (157 aa)) is the JmjC domain. Fe cation-binding residues include His249 and Asp251. 2-oxoglutarate is bound by residues Tyr259, Lys266, Tyr321, and Thr323. Tyr321 provides a ligand contact to Fe cation. Disordered stretches follow at residues 447 to 634 (KAVR…KDNK) and 646 to 674 (GSKALRPPTSPGVFGALQNFKEDKPKPVR). Ser474 is subject to Phosphoserine. A Phosphothreonine modification is found at Thr479. The segment covering 503–518 (SKIPKPPKPPKPPRPP) has biased composition (pro residues). Residue Ser539 is modified to Phosphoserine. Composition is skewed to basic and acidic residues over residues 548–563 (LEAHTKEALTKMEPPK) and 578–624 (DVVH…KLEK). A Phosphoserine modification is found at Ser655. The segment covering 665–674 (FKEDKPKPVR) has biased composition (basic and acidic residues). Ser681 and Ser705 each carry phosphoserine. Residue Lys711 forms a Glycyl lysine isopeptide (Lys-Gly) (interchain with G-Cter in SUMO2) linkage. Disordered stretches follow at residues 719–799 (TKPK…QGML), 817–846 (AGQAKGSSLAAHGARKNGGGSGKSAGKRLL), and 877–1078 (YPSL…MATA). Position 720 is an N6-acetyllysine (Lys720). The residue at position 728 (Tyr728) is a Phosphotyrosine. Basic and acidic residues predominate over residues 729-757 (KSDDSSDEGSLHIDTDTKPGRNARVKKES). Phosphoserine is present on residues Ser730, Ser733, Ser734, and Ser738. A phosphoserine mark is found at Ser879, Ser882, and Ser899. Positions 916–925 (RQDRPVREGT) are enriched in basic and acidic residues. Residues 949–959 (SKKKKSAKRKL) show a composition bias toward basic residues. Low complexity-rich tracts occupy residues 960-1009 (TPNT…EGSS) and 1027-1040 (TAAGTFTGAQAGRT). A compositionally biased stretch (polar residues) spans 1053–1065 (RRPSASSPNNNTA). At Ser1056 the chain carries Phosphoserine; by PKA.

It belongs to the JHDM1 histone demethylase family. JHDM1D subfamily. In terms of assembly, component of the PHF2-ARID5B complex, at least composed of PHF2 and ARID5B. Interacts with HNF4A and NR1H4. Interacts with RELA. In terms of processing, phosphorylated by PKA on specific serine residues, leading to the formation of an active lysine demethylase complex. As to expression, widely expressed, including in liver (at protein level).

It localises to the nucleus. The protein resides in the nucleolus. Its subcellular location is the chromosome. The protein localises to the centromere. It is found in the kinetochore. The catalysed reaction is N(6),N(6)-dimethyl-L-lysyl(9)-[histone H3] + 2-oxoglutarate + O2 = N(6)-methyl-L-lysyl(9)-[histone H3] + formaldehyde + succinate + CO2. Its activity is regulated as follows. Enzymatically inactive by itself, and become active following phosphorylation by PKA. In terms of biological role, lysine demethylase that demethylates both histones and non-histone proteins. Enzymatically inactive by itself, and becomes active following phosphorylation by PKA: forms a complex with ARID5B and mediates demethylation of methylated ARID5B. Demethylation of ARID5B leads to target the PHF2-ARID5B complex to target promoters, where PHF2 mediates demethylation of dimethylated 'Lys-9' of histone H3 (H3K9me2), followed by transcription activation of target genes. The PHF2-ARID5B complex acts as a coactivator of HNF4A in liver. PHF2 is recruited to trimethylated 'Lys-4' of histone H3 (H3K4me3) at rDNA promoters and promotes expression of rDNA. Involved in the activation of toll-like receptor 4 (TLR4)-target inflammatory genes in macrophages by catalyzing the demethylation of trimethylated histone H4 lysine 20 (H4K20me3) at the gene promoters. The protein is Lysine-specific demethylase PHF2 of Homo sapiens (Human).